The following is a 355-amino-acid chain: Methylthioribose-1-phosphate isomerase (355 aa).

Substrate is bound by residues 52 to 54 (RGA), arginine 95, and glutamine 204. The Proton donor role is filled by aspartate 245. 255–256 (NK) lines the substrate pocket.

Belongs to the eIF-2B alpha/beta/delta subunits family. MtnA subfamily.

The catalysed reaction is 5-(methylsulfanyl)-alpha-D-ribose 1-phosphate = 5-(methylsulfanyl)-D-ribulose 1-phosphate. It functions in the pathway amino-acid biosynthesis; L-methionine biosynthesis via salvage pathway; L-methionine from S-methyl-5-thio-alpha-D-ribose 1-phosphate: step 1/6. Functionally, catalyzes the interconversion of methylthioribose-1-phosphate (MTR-1-P) into methylthioribulose-1-phosphate (MTRu-1-P). In Acaryochloris marina (strain MBIC 11017), this protein is Methylthioribose-1-phosphate isomerase.